The sequence spans 992 residues: Aminopeptidase Q (992 aa).

Residues 2–13 are Cytoplasmic-facing; sequence GPPSSSGFYVSR. The chain crosses the membrane as a helical; Signal-anchor for type II membrane protein span at residues 14-34; the sequence is AVALLLAALAAALLLALAVLA. At 35–992 the chain is on the extracellular side; it reads ALYGRCARVQ…RMTAWLRKNT (958 aa). The segment at 48–92 is disordered; the sequence is LHHGGVPDAASSPRGTQEEQLPTWPPRPTREPAGTATPGHWRPPG. An N-linked (GlcNAc...) asparagine glycan is attached at Asn133. Glu241 provides a ligand contact to substrate. 4 N-linked (GlcNAc...) asparagine glycosylation sites follow: Asn262, Asn289, Asn347, and Asn361. Residue 380–384 participates in substrate binding; that stretch reads SAMEN. His416 is a Zn(2+) binding site. Glu417 functions as the Proton acceptor in the catalytic mechanism. Zn(2+)-binding residues include His420 and Glu439. A glycan (N-linked (GlcNAc...) asparagine) is linked at Asn489. Catalysis depends on Tyr505, which acts as the Proton donor. N-linked (GlcNAc...) asparagine glycosylation is found at Asn584, Asn602, Asn609, Asn655, Asn811, Asn850, and Asn889.

It belongs to the peptidase M1 family. It depends on Zn(2+) as a cofactor. In terms of tissue distribution, expressed in skin. Expression levels do not differ between dark and light skin areas.

Its subcellular location is the membrane. Metalloprotease which may be important for placentation by regulating biological activity of key peptides at the embryo-maternal interface. Involved in coat pigmentation patterns. During skin development, may be required to establish the periodicity of tabby markings, initiating a pre-pattern at or before hair follicle development. The chain is Aminopeptidase Q (LVRN) from Acinonyx jubatus (Cheetah).